The primary structure comprises 306 residues: MRKRKLGTSDLDISEVGLGCMSLGTEKNKALSILDEAIELGINYLDTADLYDRGRNEEIVGDAIQNRRHDIILATKAGNRWDDGSEGWYWDPSKAYIKEAVKKSLTRLKTDYIDLYQLHGGTIEDNIDETIEAFEELKQEGVIRYYGISSIRPNVIKEYVKKSNIVSIMMQFSLFDRRPEEWLPLLEEHQISVVARGPVAKGLLTEKPLDQASESMKQNGYLSYSFEELTNARKAMEEVAPDLSMTEKSLQYLLAQPAVASVITGASKIEQLRENIQAANARRLTEEEIKALQSHTKQDIYKAHRS.

Tyrosine 51 acts as the Proton donor in catalysis. 197 to 207 (GPVAKGLLTEK) is a binding site for NADP(+).

This sequence belongs to the aldo/keto reductase family. Aldo/keto reductase 2 subfamily.

This is an uncharacterized protein from Bacillus subtilis (strain 168).